A 278-amino-acid polypeptide reads, in one-letter code: Small ribosomal subunit protein uS2 (278 aa).

A disordered region spans residues 233–257 (IDMEAAGEAPANKGKKKSVKARLDK).

This sequence belongs to the universal ribosomal protein uS2 family.

This chain is Small ribosomal subunit protein uS2, found in Bacteroides thetaiotaomicron (strain ATCC 29148 / DSM 2079 / JCM 5827 / CCUG 10774 / NCTC 10582 / VPI-5482 / E50).